The sequence spans 143 residues: Nucleoside diphosphate kinase (143 aa).

Residues Lys-11, Phe-59, Arg-87, Thr-93, Arg-104, and Asn-114 each contribute to the ATP site. His-117 serves as the catalytic Pros-phosphohistidine intermediate.

It belongs to the NDK family. In terms of assembly, homotetramer. The cofactor is Mg(2+).

The protein localises to the cytoplasm. The catalysed reaction is a 2'-deoxyribonucleoside 5'-diphosphate + ATP = a 2'-deoxyribonucleoside 5'-triphosphate + ADP. The enzyme catalyses a ribonucleoside 5'-diphosphate + ATP = a ribonucleoside 5'-triphosphate + ADP. Functionally, major role in the synthesis of nucleoside triphosphates other than ATP. The ATP gamma phosphate is transferred to the NDP beta phosphate via a ping-pong mechanism, using a phosphorylated active-site intermediate. The chain is Nucleoside diphosphate kinase from Shewanella amazonensis (strain ATCC BAA-1098 / SB2B).